Consider the following 1729-residue polypeptide: 182 kDa tankyrase-1-binding protein (1729 aa).

Residues M1–M12 show a composition bias toward polar residues. The segment at M1 to P151 is disordered. Phosphoserine is present on S14. Over residues A46–V63 the composition is skewed to low complexity. A compositionally biased stretch (basic and acidic residues) spans T117–P127. T131 bears the Phosphothreonine mark. S178, S221, and S228 each carry phosphoserine. Disordered regions lie at residues G184–L450, P484–L603, and E657–D880. The tract at residues D210–R1572 is acidic. The segment covering A230 to L245 has biased composition (basic and acidic residues). A Phosphothreonine modification is found at T239. 2 positions are modified to phosphoserine: S287 and S301. A compositionally biased stretch (low complexity) spans P352 to E363. A compositionally biased stretch (pro residues) spans A364–V374. Residues S429, S435, S437, S494, and S498 each carry the phosphoserine modification. Composition is skewed to low complexity over residues I500 to A512, V524 to S541, and L572 to L583. T501 is modified (phosphothreonine). 9 positions are modified to phosphoserine: S601, S672, S691, S695, S712, S724, S744, S762, and S806. The span at P738–S753 shows a compositional bias: polar residues. Polar residues predominate over residues A803–V812. T833 is subject to Phosphothreonine. Phosphoserine occurs at positions 836, 851, 872, 877, 882, and 893. A compositionally biased stretch (basic and acidic residues) spans R858–S872. Y897 carries the phosphotyrosine modification. The interval Y897–K1083 is disordered. 4 positions are modified to phosphoserine: S899, S920, S936, and S976. T979 carries the phosphothreonine modification. Phosphoserine is present on residues S983, S987, S1004, S1008, S1013, S1024, S1029, S1054, S1073, S1091, S1103, S1133, S1138, S1158, S1178, S1248, and S1253. Basic and acidic residues predominate over residues G1012–E1021. Polar residues predominate over residues R1043–S1054. The disordered stretch occupies residues E1240–K1302. T1282 carries the post-translational modification Phosphothreonine. Phosphoserine is present on residues S1297, S1328, S1331, S1383, and S1385. The interval A1362 to E1561 is disordered. Basic and acidic residues predominate over residues E1389 to G1400. The segment covering G1406–L1419 has biased composition (polar residues). S1435, S1439, S1450, S1452, S1473, S1476, S1503, and S1506 each carry phosphoserine. The interval S1450–R1542 is tankyrase-binding. Phosphothreonine is present on T1518. Phosphoserine occurs at positions 1533, 1545, and 1558. T1563 carries the post-translational modification Phosphothreonine. The disordered stretch occupies residues A1575–V1729. Positions L1577–P1586 are enriched in basic residues. Over residues S1602–A1615 the composition is skewed to basic and acidic residues. Phosphoserine occurs at positions 1620, 1621, and 1631. The Nuclear localization signal signature appears at P1629–R1635. N6-methyllysine is present on K1644. 3 positions are modified to phosphoserine: S1652, S1666, and S1715. The segment covering R1665–Q1679 has biased composition (basic and acidic residues). Residues K1723–V1729 carry the Nuclear localization signal motif.

In terms of assembly, binds to the ANK repeat domain of TNKS1 and TNKS2. Post-translationally, ADP-ribosylated by TNKS1 (in vitro). Detected in testis, ovary, lung, skeletal muscle, heart, prostate and pancreas, and at very low levels in brain and peripheral blood leukocytes.

Its subcellular location is the nucleus. It is found in the cytoplasm. The protein localises to the cytoskeleton. The protein resides in the chromosome. The protein is 182 kDa tankyrase-1-binding protein (TNKS1BP1) of Homo sapiens (Human).